Here is a 396-residue protein sequence, read N- to C-terminus: Inositol polyphosphate multikinase (396 aa).

The segment covering 1–13 (MAAEPPALRLRPP) has biased composition (low complexity). The interval 1–22 (MAAEPPALRLRPPGSTGDSPPV) is disordered. Ala2 carries the N-acetylalanine modification. Ser19 is modified (phosphoserine). Lys58 contacts ATP. Substrate is bound at residue Arg65. Residues 114–116 (EDV) and Asp127 contribute to the ATP site. Substrate contacts are provided by residues Lys129, 143 to 150 (KIQQQVSK), and Gln179. The short motif at 300 to 310 (RHRKLYAKKHQ) is the Nuclear localization signal element. Asp365 serves as a coordination point for ATP.

The protein belongs to the inositol phosphokinase (IPK) family. Mg(2+) serves as cofactor. As to expression, highly expressed in kidney, and at lower levels in hippocampus, brain cortex, cerebellum, heart and lung.

Its subcellular location is the nucleus. It carries out the reaction 1D-myo-inositol 1,4,5-trisphosphate + 2 ATP = 1D-myo-inositol 1,3,4,5,6-pentakisphosphate + 2 ADP + 2 H(+). The enzyme catalyses 1D-myo-inositol 1,3,4,6-tetrakisphosphate + ATP = 1D-myo-inositol 1,3,4,5,6-pentakisphosphate + ADP + H(+). It catalyses the reaction 1-octadecanoyl-2-(5Z,8Z,11Z,14Z)-eicosatetraenoyl-sn-glycero-3-phospho-1D-myo-inositol 4,5-bisphosphate + ATP = 1-octadecanoyl-2-(5Z,8Z,11Z,14Z-eicosatetraenoyl)-sn-glycero-3-phospho-(1D-myo-inositol 3,4,5-triphosphate) + ADP + H(+). The catalysed reaction is a 1,2-diacyl-sn-glycero-3-phospho-(1D-myo-inositol-4,5-bisphosphate) + ATP = a 1,2-diacyl-sn-glycero-3-phospho-(1D-myo-inositol-3,4,5-trisphosphate) + ADP + H(+). It carries out the reaction 1D-myo-inositol 1,4,5,6-tetrakisphosphate + ATP = 1D-myo-inositol 1,3,4,5,6-pentakisphosphate + ADP + H(+). It participates in phospholipid metabolism; phosphatidylinositol metabolism. In terms of biological role, inositol phosphate kinase with a broad substrate specificity. Phosphorylates inositol 1,4,5-trisphosphate (Ins(1,4,5)P3) first to inositol 1,3,4,5-tetrakisphosphate and then to inositol 1,3,4,5,6-pentakisphosphate (Ins(1,3,4,5,6)P5). Phosphorylates inositol 1,3,4,6-tetrakisphosphate (Ins(1,3,4,6)P4). Phosphorylates inositol 1,4,5,6-tetrakisphosphate (Ins(1,4,5,6)P4). Phosphorylates glycero-3-phospho-1D-myo-inositol 4,5-bisphosphate to glycero-3-phospho-1D-myo-inositol 3,4,5-trisphosphate. Plays an important role in MLKL-mediated necroptosis via its role in the biosynthesis of inositol pentakisphosphate (InsP5) and inositol hexakisphosphate (InsP6). Binding of these highly phosphorylated inositol phosphates to MLKL mediates the release of an N-terminal auto-inhibitory region, leading to activation of the kinase. Essential for activated phospho-MLKL to oligomerize and localize to the cell membrane during necroptosis. Required for normal embryonic development, probably via its role in the biosynthesis of inositol 1,3,4,5,6-pentakisphosphate (Ins(1,3,4,5,6)P5) and inositol hexakisphosphate (InsP6). This Rattus norvegicus (Rat) protein is Inositol polyphosphate multikinase (Ipmk).